Consider the following 125-residue polypeptide: Small ribosomal subunit protein uS12c (125 aa).

It belongs to the universal ribosomal protein uS12 family. In terms of assembly, part of the 30S ribosomal subunit.

It is found in the plastid. In terms of biological role, with S4 and S5 plays an important role in translational accuracy. Located at the interface of the 30S and 50S subunits. This is Small ribosomal subunit protein uS12c (rps12) from Euglena longa (Euglenophycean alga).